The chain runs to 152 residues: MKKVVATGTFDIIHPGHVRFLEEAKKLGDYLVVIVAREKNVKHKPKPIMPEEQRRRVVEALKPVDEAILGDEEDIFKPIEKIKPDVIALGYDQHFDEEWLREELRKRGIKAEVVRIRAKEDCELCSSAKIIERIVTLASSRLKDFQERKEKL.

Residues 9 to 10 (TF), 14 to 17 (HPGH), and Asp-92 each bind ATP.

This sequence belongs to the archaeal FAD synthase family. Homodimer. Requires a divalent metal cation as cofactor.

It carries out the reaction FMN + ATP + H(+) = FAD + diphosphate. It functions in the pathway cofactor biosynthesis; FAD biosynthesis; FAD from FMN: step 1/1. In terms of biological role, catalyzes the transfer of the AMP portion of ATP to flavin mononucleotide (FMN) to produce flavin adenine dinucleotide (FAD) coenzyme. This is FAD synthase from Ferroglobus placidus (strain DSM 10642 / AEDII12DO).